A 483-amino-acid chain; its full sequence is MTVTAEKTDKSASSETSGRVVRVTGPVVDVEFPRGSVPELFNALHAKIDFGSLAKTLTLEVAQHLGDSLVRTISLQPTDGLVRGTEVTDTGRPISVPVGESVKGHVFNALGDCLDEPGYGEDFEHWSIHRKPPAFEDLEPRTEMLETGLKVVDLLTPYVRGGKIALFGGAGVGKTVLIQEMINRIARNFGGTSVFAGVGERTREGNDLWVELQEANVLKDTALVFGQMDEPPGTRMRVALSALTMAEWFRDEAGQDVLLFIDNIFRFTQAGSEVSTLLGRMPSAVGYQPTLADEMGELQERITSTRGRSITSMQAVYVPADDYTDPAPATTFAHLDATTELSRAVFSKGIFPAVDPLASSSTILDPGVVGDEHYRVAQEVIRILQRYKDLQDIIAILGIDELSEEDKQLVNRARRIERFLSQNMMAAEQFTGQPGSTVPVKETIEAFDRLCKGEFDHVPEQAFFLIGGLDDLAKKAESLGAKL.

168–175 (GGAGVGKT) is an ATP binding site.

It belongs to the ATPase alpha/beta chains family. F-type ATPases have 2 components, CF(1) - the catalytic core - and CF(0) - the membrane proton channel. CF(1) has five subunits: alpha(3), beta(3), gamma(1), delta(1), epsilon(1). CF(0) has three main subunits: a(1), b(2) and c(9-12). The alpha and beta chains form an alternating ring which encloses part of the gamma chain. CF(1) is attached to CF(0) by a central stalk formed by the gamma and epsilon chains, while a peripheral stalk is formed by the delta and b chains.

The protein localises to the cell membrane. It catalyses the reaction ATP + H2O + 4 H(+)(in) = ADP + phosphate + 5 H(+)(out). Its function is as follows. Produces ATP from ADP in the presence of a proton gradient across the membrane. The catalytic sites are hosted primarily by the beta subunits. This Mycobacterium ulcerans (strain Agy99) protein is ATP synthase subunit beta.